A 476-amino-acid chain; its full sequence is Aspartyl/glutamyl-tRNA(Asn/Gln) amidotransferase subunit B (476 aa).

Belongs to the GatB/GatE family. GatB subfamily. As to quaternary structure, heterotrimer of A, B and C subunits.

The catalysed reaction is L-glutamyl-tRNA(Gln) + L-glutamine + ATP + H2O = L-glutaminyl-tRNA(Gln) + L-glutamate + ADP + phosphate + H(+). It carries out the reaction L-aspartyl-tRNA(Asn) + L-glutamine + ATP + H2O = L-asparaginyl-tRNA(Asn) + L-glutamate + ADP + phosphate + 2 H(+). Allows the formation of correctly charged Asn-tRNA(Asn) or Gln-tRNA(Gln) through the transamidation of misacylated Asp-tRNA(Asn) or Glu-tRNA(Gln) in organisms which lack either or both of asparaginyl-tRNA or glutaminyl-tRNA synthetases. The reaction takes place in the presence of glutamine and ATP through an activated phospho-Asp-tRNA(Asn) or phospho-Glu-tRNA(Gln). This Neisseria meningitidis serogroup B (strain ATCC BAA-335 / MC58) protein is Aspartyl/glutamyl-tRNA(Asn/Gln) amidotransferase subunit B.